The following is a 267-amino-acid chain: Glutamate racemase (267 aa).

Substrate contacts are provided by residues 10–11 and 42–43; these read DS and YG. Cys73 (proton donor/acceptor) is an active-site residue. Residue 74-75 participates in substrate binding; sequence NT. Catalysis depends on Cys183, which acts as the Proton donor/acceptor. 184 to 185 provides a ligand contact to substrate; sequence TH.

The protein belongs to the aspartate/glutamate racemases family.

The enzyme catalyses L-glutamate = D-glutamate. It functions in the pathway cell wall biogenesis; peptidoglycan biosynthesis. In terms of biological role, provides the (R)-glutamate required for cell wall biosynthesis. This chain is Glutamate racemase, found in Lactobacillus acidophilus (strain ATCC 700396 / NCK56 / N2 / NCFM).